We begin with the raw amino-acid sequence, 407 residues long: Elongation factor Tu (407 aa).

One can recognise a tr-type G domain in the interval 10-217 (KPHVNVGTIG…ALDSYIPEPE (208 aa)). The interval 19–26 (GHVDHGKT) is G1. A GTP-binding site is contributed by 19–26 (GHVDHGKT). Mg(2+) is bound at residue Thr26. Positions 60-64 (GITIA) are G2. The segment at 81–84 (DCPG) is G3. GTP-binding positions include 81-85 (DCPGH) and 136-139 (NKAD). A G4 region spans residues 136 to 139 (NKAD). Positions 184–186 (SAL) are G5.

The protein belongs to the TRAFAC class translation factor GTPase superfamily. Classic translation factor GTPase family. EF-Tu/EF-1A subfamily. As to quaternary structure, monomer.

The protein localises to the cytoplasm. It catalyses the reaction GTP + H2O = GDP + phosphate + H(+). In terms of biological role, GTP hydrolase that promotes the GTP-dependent binding of aminoacyl-tRNA to the A-site of ribosomes during protein biosynthesis. The sequence is that of Elongation factor Tu from Saccharophagus degradans (strain 2-40 / ATCC 43961 / DSM 17024).